A 359-amino-acid chain; its full sequence is N-acetylneuraminate-9-phosphate synthase (359 aa).

3 positions are modified to N6-acetyllysine: lysine 61, lysine 74, and lysine 79. A Phosphoserine modification is found at serine 275. Lysine 290 carries the N6-acetyllysine modification. The AFP-like domain maps to 294-353 (SVVAKVKIPEGTILTMDMLTVKVGEPKGYPPEDIFNLVGKKVLVTVEEDDTIMEELVDNH).

Ubiquitous.

It catalyses the reaction aldehydo-N-acetyl-D-mannosamine 6-phosphate + phosphoenolpyruvate + H2O = N-acetylneuraminate 9-phosphate + phosphate. The catalysed reaction is aldehydo-D-mannose 6-phosphate + phosphoenolpyruvate + H2O = 3-deoxy-D-glycero-beta-D-galacto-non-2-ulopyranosonate 9-phosphate + phosphate. Catalyzes the condensation of phosphoenolpyruvate (PEP) and N-acetylmannosamine 6-phosphate (ManNAc-6-P) to synthesize N-acetylneuraminate-9-phosphate (Neu5Ac-9-P). Also catalyzes the condensation of PEP and D-mannose 6-phosphate (Man-6-P) to produce 3-deoxy-D-glycero-beta-D-galacto-non-2-ulopyranosonate 9-phosphate (KDN-9-P). Neu5Ac-9-P and KDN-9-P are the phosphorylated forms of sialic acids N-acetylneuraminic acid (Neu5Ac) and deaminoneuraminic acid (KDN), respectively. Required for brain and skeletal development. The chain is N-acetylneuraminate-9-phosphate synthase from Homo sapiens (Human).